Here is a 108-residue protein sequence, read N- to C-terminus: Transmembrane protein 265 (108 aa).

2 consecutive transmembrane segments (helical) span residues 34-54 and 78-98; these read AATS…VFAI and LILA…LLLW.

Belongs to the CD225/Dispanin family.

The protein resides in the membrane. The chain is Transmembrane protein 265 from Homo sapiens (Human).